The chain runs to 505 residues: Cytochrome P450 CYP71D313 (505 aa).

The helical transmembrane segment at 1–21 threads the bilayer; it reads MELQFPLFSIFFVTILFFFLF. A heme-binding site is contributed by C441. Residues 442–462 traverse the membrane as a helical segment; it reads PGIAFGIATIELPLALLLYHF.

This sequence belongs to the cytochrome P450 family. The cofactor is heme.

The protein localises to the membrane. In terms of biological role, probable heme-thiolate monooxygenase. This chain is Cytochrome P450 CYP71D313, found in Panax ginseng (Korean ginseng).